Here is a 727-residue protein sequence, read N- to C-terminus: Kinesin-like protein KIN-14G (727 aa).

Disordered stretches follow at residues 100 to 156 (QTAP…LHLR), 172 to 194 (HLSAPSRSPTPPPNAVAPSSCSR), and 336 to 357 (LAGGARSGRRDNPRRQGTGATR). Over residues 114–133 (VASSTAGRASRTKSASSTGR) the composition is skewed to polar residues. The Kinesin motor domain maps to 381 to 710 (NIRVFCRVRP…LRFAARVNSC (330 aa)). ATP is bound at residue 461–468 (GQTGSGKT).

Belongs to the TRAFAC class myosin-kinesin ATPase superfamily. Kinesin family. KIN-14 subfamily.

This chain is Kinesin-like protein KIN-14G, found in Oryza sativa subsp. japonica (Rice).